The primary structure comprises 509 residues: ATP synthase subunit alpha (509 aa).

169–176 (GDRQTGKT) is a binding site for ATP.

It belongs to the ATPase alpha/beta chains family. F-type ATPases have 2 components, CF(1) - the catalytic core - and CF(0) - the membrane proton channel. CF(1) has five subunits: alpha(3), beta(3), gamma(1), delta(1), epsilon(1). CF(0) has three main subunits: a(1), b(2) and c(9-12). The alpha and beta chains form an alternating ring which encloses part of the gamma chain. CF(1) is attached to CF(0) by a central stalk formed by the gamma and epsilon chains, while a peripheral stalk is formed by the delta and b chains.

It localises to the cell inner membrane. The enzyme catalyses ATP + H2O + 4 H(+)(in) = ADP + phosphate + 5 H(+)(out). In terms of biological role, produces ATP from ADP in the presence of a proton gradient across the membrane. The alpha chain is a regulatory subunit. This Methylobacterium sp. (strain 4-46) protein is ATP synthase subunit alpha.